The primary structure comprises 555 residues: TBCC domain-containing protein 1 (555 aa).

Residues 302-433 (PEVSPMVIMS…LEDHMAQVGL (132 aa)) form the C-CAP/cofactor C-like domain.

Belongs to the TBCC family.

The protein localises to the cytoplasm. It is found in the cytoskeleton. The protein resides in the microtubule organizing center. It localises to the centrosome. Its subcellular location is the spindle pole. In terms of biological role, may play a role in the regulation of centrosome and Golgi apparatus positioning. This chain is TBCC domain-containing protein 1 (TBCCD1), found in Gallus gallus (Chicken).